Reading from the N-terminus, the 311-residue chain is Methionyl-tRNA formyltransferase (311 aa).

Residue 109 to 112 (SLLP) coordinates (6S)-5,6,7,8-tetrahydrofolate.

Belongs to the Fmt family.

It carries out the reaction L-methionyl-tRNA(fMet) + (6R)-10-formyltetrahydrofolate = N-formyl-L-methionyl-tRNA(fMet) + (6S)-5,6,7,8-tetrahydrofolate + H(+). In terms of biological role, attaches a formyl group to the free amino group of methionyl-tRNA(fMet). The formyl group appears to play a dual role in the initiator identity of N-formylmethionyl-tRNA by promoting its recognition by IF2 and preventing the misappropriation of this tRNA by the elongation apparatus. This chain is Methionyl-tRNA formyltransferase, found in Moorella thermoacetica (strain ATCC 39073 / JCM 9320).